The chain runs to 808 residues: Sucrose synthase isoform 1 (808 aa).

Residues 277 to 754 (MVFNVVILSP…GLKRIQEKYT (478 aa)) form a GT-B glycosyltransferase region.

It belongs to the glycosyltransferase 1 family. Plant sucrose synthase subfamily. In terms of assembly, homotetramer. As to expression, expressed in stems, in roots at different developmental stages, and in flower buds, flowers and maturing seeds, with the highest levels in strong utilization sinks for sucrose such as growing stems and tap root tips.

The catalysed reaction is an NDP-alpha-D-glucose + D-fructose = a ribonucleoside 5'-diphosphate + sucrose + H(+). Fructose acts as a non-competitive inhibitor with an inhibition constant of 17.2 mM. In contrast, glucose inhibits uncompetitively with an inhibition constant of 4.3 mM. In terms of biological role, sucrose-cleaving enzyme that provides UDP-glucose and fructose for various metabolic pathways. The sequence is that of Sucrose synthase isoform 1 from Daucus carota (Wild carrot).